The sequence spans 220 residues: Probable L-serine dehydratase, beta chain (220 aa).

Positions 148-220 (AILVVHNDKF…NIIQVTKIAD (73 aa)) constitute an ACT domain.

Belongs to the iron-sulfur dependent L-serine dehydratase family. In terms of assembly, heterodimer of an alpha chain and a beta chain. [4Fe-4S] cluster serves as cofactor.

The enzyme catalyses L-serine = pyruvate + NH4(+). Its pathway is carbohydrate biosynthesis; gluconeogenesis. This Bacillus subtilis (strain 168) protein is Probable L-serine dehydratase, beta chain (sdaAB).